Reading from the N-terminus, the 520-residue chain is Maturase K (520 aa).

Belongs to the intron maturase 2 family. MatK subfamily.

The protein resides in the plastid. The protein localises to the chloroplast. In terms of biological role, usually encoded in the trnK tRNA gene intron. Probably assists in splicing its own and other chloroplast group II introns. This chain is Maturase K, found in Galanthus elwesii (Giant snowdrop).